A 431-amino-acid chain; its full sequence is D-inositol 3-phosphate glycosyltransferase (431 aa).

H14 lines the 1D-myo-inositol 3-phosphate pocket. Residues Q20–P21 and G28 contribute to the UDP-N-acetyl-alpha-D-glucosamine site. Residues D25 to N30, K83, Y116, T140, and R160 contribute to the 1D-myo-inositol 3-phosphate site. UDP-N-acetyl-alpha-D-glucosamine-binding residues include R240 and K245. Mg(2+) is bound by residues Y315, R316, and A318. Positions 328 and 336 each coordinate UDP-N-acetyl-alpha-D-glucosamine. T342 is a Mg(2+) binding site.

The protein belongs to the glycosyltransferase group 1 family. MshA subfamily. Homodimer.

The enzyme catalyses 1D-myo-inositol 3-phosphate + UDP-N-acetyl-alpha-D-glucosamine = 1D-myo-inositol 2-acetamido-2-deoxy-alpha-D-glucopyranoside 3-phosphate + UDP + H(+). Its function is as follows. Catalyzes the transfer of a N-acetyl-glucosamine moiety to 1D-myo-inositol 3-phosphate to produce 1D-myo-inositol 2-acetamido-2-deoxy-glucopyranoside 3-phosphate in the mycothiol biosynthesis pathway. The chain is D-inositol 3-phosphate glycosyltransferase from Thermomonospora curvata (strain ATCC 19995 / DSM 43183 / JCM 3096 / KCTC 9072 / NBRC 15933 / NCIMB 10081 / Henssen B9).